Reading from the N-terminus, the 287-residue chain is Putative glutamate--cysteine ligase regulatory subunit (287 aa).

This sequence belongs to the aldo/keto reductase family. Glutamate--cysteine ligase light chain subfamily. In terms of assembly, heterodimer of a catalytic heavy chain and a regulatory light chain.

The protein resides in the cytoplasm. It participates in sulfur metabolism; glutathione biosynthesis; glutathione from L-cysteine and L-glutamate: step 1/2. The polypeptide is Putative glutamate--cysteine ligase regulatory subunit (Schizosaccharomyces pombe (strain 972 / ATCC 24843) (Fission yeast)).